A 349-amino-acid chain; its full sequence is Ornithine carbamoyltransferase, mitochondrial (349 aa).

Residues 73-76 (STRT), arginine 124, histidine 151, and glutamine 154 each bind carbamoyl phosphate. Asparagine 195, aspartate 261, serine 265, and methionine 266 together coordinate L-ornithine. Residue cysteine 303 is the Proton acceptor of the active site. Carbamoyl phosphate is bound by residues 303 to 304 (CL) and arginine 330.

Belongs to the aspartate/ornithine carbamoyltransferase superfamily. OTCase family. In terms of assembly, homotrimer.

It localises to the mitochondrion matrix. It catalyses the reaction carbamoyl phosphate + L-ornithine = L-citrulline + phosphate + H(+). The protein operates within amino-acid biosynthesis; L-arginine biosynthesis; L-arginine from L-ornithine and carbamoyl phosphate: step 1/3. In Coccidioides immitis (strain RS) (Valley fever fungus), this protein is Ornithine carbamoyltransferase, mitochondrial.